The primary structure comprises 253 residues: Spermatogenesis-associated protein 9 (253 aa).

Residues 144 to 166 form a helical membrane-spanning segment; that stretch reads LTSIMCASYAALIYLTVCVNAVL. Positions 210-228 are enriched in basic and acidic residues; that stretch reads AKPYRSLPEKPDSISDRPK. The tract at residues 210-231 is disordered; the sequence is AKPYRSLPEKPDSISDRPKLPA.

Its subcellular location is the membrane. May play at role in testicular development/spermatogenesis and may be an important factor in male infertility. This Bos taurus (Bovine) protein is Spermatogenesis-associated protein 9 (SPATA9).